The following is a 423-amino-acid chain: Methionine aminopeptidase 2 (423 aa).

Residues 1-17 show a composition bias toward basic and acidic residues; that stretch reads MTDVIDAKPEEAKKVPP. The segment at 1–89 is disordered; sequence MTDVIDAKPE…IQPYKDDNAY (89 aa). The span at 18–29 shows a compositional bias: acidic residues; that stretch reads EVEDEDSGDESA. The segment covering 41-54 has biased composition (basic residues); that stretch reads KKKKKKKKPKKKKK. His176 serves as a coordination point for substrate. The a divalent metal cation site is built by Asp196, Asp207, and His276. His284 is a binding site for substrate. 2 residues coordinate a divalent metal cation: Glu309 and Glu404.

This sequence belongs to the peptidase M24A family. Methionine aminopeptidase eukaryotic type 2 subfamily. It depends on Co(2+) as a cofactor. Zn(2+) serves as cofactor. The cofactor is Mn(2+). Requires Fe(2+) as cofactor.

The protein resides in the cytoplasm. It carries out the reaction Release of N-terminal amino acids, preferentially methionine, from peptides and arylamides.. Functionally, cotranslationally removes the N-terminal methionine from nascent proteins. The N-terminal methionine is often cleaved when the second residue in the primary sequence is small and uncharged (Met-Ala-, Cys, Gly, Pro, Ser, Thr, or Val). The chain is Methionine aminopeptidase 2 from Schizophyllum commune (strain H4-8 / FGSC 9210) (Split gill fungus).